The chain runs to 564 residues: Beta-N-acetylglucosaminidase/beta-glucosidase (564 aa).

Aspartate 283 (nucleophile) is an active-site residue.

Belongs to the glycosyl hydrolase 3 family.

The enzyme catalyses Hydrolysis of terminal non-reducing N-acetyl-D-hexosamine residues in N-acetyl-beta-D-hexosaminides.. It catalyses the reaction Hydrolysis of terminal, non-reducing beta-D-glucosyl residues with release of beta-D-glucose.. Its function is as follows. Catalyzes the cleavage of beta-N-acetyl-D-glucosaminides and beta-D-glucosides. Might be involved in the degradation of glucuronic acid-containing glycosaminoglycans such as hyaluronic acid. This is Beta-N-acetylglucosaminidase/beta-glucosidase (nag3) from Cellulomonas fimi.